An 878-amino-acid chain; its full sequence is Phosphoenolpyruvate carboxylase (878 aa).

Catalysis depends on residues histidine 137 and lysine 545.

This sequence belongs to the PEPCase type 1 family. Mg(2+) is required as a cofactor.

It carries out the reaction oxaloacetate + phosphate = phosphoenolpyruvate + hydrogencarbonate. Functionally, forms oxaloacetate, a four-carbon dicarboxylic acid source for the tricarboxylic acid cycle. This chain is Phosphoenolpyruvate carboxylase, found in Serratia proteamaculans (strain 568).